A 557-amino-acid polypeptide reads, in one-letter code: Potassium-transporting ATPase potassium-binding subunit (557 aa).

12 consecutive transmembrane segments (helical) span residues 5 to 25, 63 to 83, 132 to 152, 170 to 190, 253 to 273, 283 to 303, 329 to 349, 356 to 376, 379 to 399, 416 to 436, 484 to 504, and 526 to 546; these read GFLLIATFLLVLMVLARPLGS, LCAILGLNMLGLAVLFFMLLG, GLTVQNFLSAASGIAVIFALI, LLRITLWVLVPVALLIALFFI, FVQMLAIFLIPTALCFAFGEV, LLWAMSVIFVICVGVVMWAEV, VLVSSLFAVVTTAASCGAVIA, ALGGMVPMWLMQIGEVVFGGV, GLYGMMLFVLLAVFIAGLMIG, LTALAILVTPTLVLMGAALAM, LLAFCMFVGRFGVIIPVMAIA, and LFVGLLIGTVLLVGALTFIPA.

Belongs to the KdpA family. As to quaternary structure, the system is composed of three essential subunits: KdpA, KdpB and KdpC.

The protein resides in the cell inner membrane. Part of the high-affinity ATP-driven potassium transport (or Kdp) system, which catalyzes the hydrolysis of ATP coupled with the electrogenic transport of potassium into the cytoplasm. This subunit binds the periplasmic potassium ions and delivers the ions to the membrane domain of KdpB through an intramembrane tunnel. The protein is Potassium-transporting ATPase potassium-binding subunit of Escherichia coli O17:K52:H18 (strain UMN026 / ExPEC).